Here is a 402-residue protein sequence, read N- to C-terminus: CMP-sialic acid transporter 3 (402 aa).

At 1–42 (MSGEVECRVCHAKVQVPMAAAAVSKAYDIHRSSVSSRQRALN) the chain is on the cytoplasmic side. Residues 43-63 (VLLVSGDCVLAGLQPILVYMC) form a helical membrane-spanning segment. Residues 64–73 (KVDGKFKFSP) are Lumenal-facing. Residues 74-94 (VSVNFLTEITKIIFAIIMLCI) traverse the membrane as a helical segment. Over 95 to 118 (QARRLKVGEKPFLTVSTFMQAARN) the chain is Cytoplasmic. A helical membrane pass occupies residues 119–139 (NVLLAVPALFYAINNYMKFVM). Residues 140–146 (QLYFNPA) lie on the Lumenal side of the membrane. Residues 147 to 167 (TVKMLGNLKVLVIAVLLKVIM) form a helical membrane-spanning segment. At 168–170 (RRR) the chain is on the cytoplasmic side. A helical transmembrane segment spans residues 171 to 191 (FSTIQWEALALLLIGISVNQL). The Lumenal portion of the chain corresponds to 192-202 (KSLPEGSSTLG). A helical membrane pass occupies residues 203–223 (LPVAAGAYLYTLFFVTVPALA). Topologically, residues 224–243 (SVYNEKALKSQFDTSIYLQN) are cytoplasmic. The chain crosses the membrane as a helical span at residues 244–264 (LFLYGYGAIFNFLGLVITAII). At 265 to 280 (QGPSSFNILEGHSKAT) the chain is on the lumenal side. The chain crosses the membrane as a helical span at residues 281–301 (MFLICNNAAQGILSSFFFKYA). The Cytoplasmic portion of the chain corresponds to 302–321 (DTILKKYSSTIATIFTGVAS). Residues 322-342 (AVLFGHTLTINFVLAISIVII) traverse the membrane as a helical segment. Topologically, residues 343 to 402 (SMHQYLSNQIKDEVPSSKIEMGDAHEHRSKESVVVNVSDSIATEAKHRHGTDERQPLLPV) are lumenal.

The protein belongs to the nucleotide-sugar transporter family. CMP-Sialate:CMP antiporter (TC 2.A.7.12) subfamily.

It localises to the golgi apparatus membrane. Functionally, sugar transporter involved in the transport of CMP-sialic acid from the cytoplasm into the Golgi. May transport important nucleotide sugars such as CMP-Kdo (2-keto-3-deoxy-D-manno-octulosonic acid) in physiological conditions. This is CMP-sialic acid transporter 3 from Oryza sativa subsp. indica (Rice).